Consider the following 473-residue polypeptide: Hyaluronidase-2 (473 aa).

The N-terminal stretch at 1–20 (MRAGPGPTVTLALVLAVSWA) is a signal peptide. Disulfide bonds link C47/C340 and C211/C227. Residues N74 and N103 are each glycosylated (N-linked (GlcNAc...) asparagine). E135 acts as the Proton donor in catalysis. N357 carries an N-linked (GlcNAc...) asparagine glycan. The EGF-like domain maps to 361 to 439 (ATQYCSRAQC…YLGWSGEQCQ (79 aa)). Intrachain disulfides connect C365/C376, C370/C427, and C429/C438. G448 carries GPI-anchor amidated glycine lipidation. Residues 449–473 (ASEAWAGSHLTSLLALAALAFTWTL) constitute a propeptide, removed in mature form.

The protein belongs to the glycosyl hydrolase 56 family. Interacts with MST1R. In terms of tissue distribution, widely expressed (at protein level).

The protein localises to the cell membrane. It catalyses the reaction Random hydrolysis of (1-&gt;4)-linkages between N-acetyl-beta-D-glucosamine and D-glucuronate residues in hyaluronate.. In terms of biological role, catalyzes hyaluronan degradation into small fragments that are endocytosed and degraded in lysosomes by HYAL1 and exoglycosidases. Essential for the breakdown of extracellular matrix hyaluronan. This chain is Hyaluronidase-2 (HYAL2), found in Homo sapiens (Human).